We begin with the raw amino-acid sequence, 230 residues long: Secretory carrier-associated membrane protein 4 (230 aa).

The Cytoplasmic segment spans residues 1-39 (MSGKENNFPPLPKFIPLKPCFYQNFSDEIPIEHQVLVKR). Helical transmembrane passes span 40–60 (IYRLWLFYCATLGVNLVACLA), 61–81 (WWIAGGSGANFGLALLWLLLF), 105–125 (FMAFFFIFGAQFILTIIQAVG), and 149–169 (VVMLLPAIMFSMSAAMMAVMI). Topologically, residues 170–230 (MKVHSIYRGT…SYPASGGQWP (61 aa)) are cytoplasmic. The residue at position 194 (Thr194) is a Phosphothreonine. Residues 208-230 (FSGNSLPEYPTVPSYPASGGQWP) are disordered.

It belongs to the SCAMP family.

The protein resides in the membrane. Functionally, probably involved in membrane protein trafficking. This chain is Secretory carrier-associated membrane protein 4 (SCAMP4), found in Bos taurus (Bovine).